A 488-amino-acid chain; its full sequence is Bifunctional protein GlmU (488 aa).

Residues 1–237 are pyrophosphorylase; it reads MPRTRTPLAA…VEEASGVNDR (237 aa). UDP-N-acetyl-alpha-D-glucosamine-binding positions include 13–16, Lys27, Gln82, 87–88, 110–112, Gly149, Glu164, Asn179, and Asn235; these read LAAG, GT, and SGD. Asp112 is a Mg(2+) binding site. Residue Asn235 participates in Mg(2+) binding. Positions 238–258 are linker; that stretch reads VELSRANRVMVGRLAEAFMRA. The interval 259–488 is N-acetyltransferase; sequence GVTIEDPARF…KGRPAARRAS (230 aa). The UDP-N-acetyl-alpha-D-glucosamine site is built by Arg341 and Lys359. Catalysis depends on His371, which acts as the Proton acceptor. Residues Tyr374 and Asn385 each contribute to the UDP-N-acetyl-alpha-D-glucosamine site. Residues Ala388, 394 to 395, Ser413, Ala431, and Arg448 contribute to the acetyl-CoA site; that span reads NY. A disordered region spans residues 459 to 488; the sequence is AQRQAEKQMKGTATGPASARKGRPAARRAS. Positions 478 to 488 are enriched in basic residues; sequence RKGRPAARRAS.

In the N-terminal section; belongs to the N-acetylglucosamine-1-phosphate uridyltransferase family. The protein in the C-terminal section; belongs to the transferase hexapeptide repeat family. As to quaternary structure, homotrimer. The cofactor is Mg(2+).

It localises to the cytoplasm. It catalyses the reaction alpha-D-glucosamine 1-phosphate + acetyl-CoA = N-acetyl-alpha-D-glucosamine 1-phosphate + CoA + H(+). The catalysed reaction is N-acetyl-alpha-D-glucosamine 1-phosphate + UTP + H(+) = UDP-N-acetyl-alpha-D-glucosamine + diphosphate. It participates in nucleotide-sugar biosynthesis; UDP-N-acetyl-alpha-D-glucosamine biosynthesis; N-acetyl-alpha-D-glucosamine 1-phosphate from alpha-D-glucosamine 6-phosphate (route II): step 2/2. Its pathway is nucleotide-sugar biosynthesis; UDP-N-acetyl-alpha-D-glucosamine biosynthesis; UDP-N-acetyl-alpha-D-glucosamine from N-acetyl-alpha-D-glucosamine 1-phosphate: step 1/1. The protein operates within bacterial outer membrane biogenesis; LPS lipid A biosynthesis. Its function is as follows. Catalyzes the last two sequential reactions in the de novo biosynthetic pathway for UDP-N-acetylglucosamine (UDP-GlcNAc). The C-terminal domain catalyzes the transfer of acetyl group from acetyl coenzyme A to glucosamine-1-phosphate (GlcN-1-P) to produce N-acetylglucosamine-1-phosphate (GlcNAc-1-P), which is converted into UDP-GlcNAc by the transfer of uridine 5-monophosphate (from uridine 5-triphosphate), a reaction catalyzed by the N-terminal domain. This Anaeromyxobacter sp. (strain K) protein is Bifunctional protein GlmU.